The chain runs to 310 residues: Putative S-adenosyl-L-methionine-dependent methyltransferase ML2640 (310 aa).

S-adenosyl-L-methionine contacts are provided by residues Asp132 and 161–162; that span reads DL.

It belongs to the UPF0677 family.

Exhibits S-adenosyl-L-methionine-dependent methyltransferase activity. This chain is Putative S-adenosyl-L-methionine-dependent methyltransferase ML2640, found in Mycobacterium leprae (strain TN).